The primary structure comprises 2283 residues: Serine-rich adhesin for platelets (2283 aa).

A signal peptide spans 1–89 (MSKRQKAFHD…VNMLHDQQAF (89 aa)). The segment at 90-230 (AASDAPLTSE…KTSTTSTSTA (141 aa)) is serine-rich repeat region 1, SRR1. The segment covering 100–111 (LNTQSETVGNQN) has biased composition (polar residues). Disordered stretches follow at residues 100–230 (LNTQ…TSTA), 691–721 (NSGN…GTPT), and 751–2255 (NSMS…GLLG). Over residues 112–128 (STTIEASTSTADSTSVT) the composition is skewed to low complexity. Residues 129–140 (KNSSSVQTSNSD) show a composition bias toward polar residues. The span at 149–229 (NVTSTTNSTS…NKTSTTSTST (81 aa)) shows a compositional bias: low complexity. The non-repeat region (NRR) stretch occupies residues 231-751 (PVKLRTFSRL…TTFKYEVTRN (521 aa)). Composition is skewed to low complexity over residues 752 to 1323 (SMSD…SDSI), 1330 to 1894 (SLSA…QSSS), and 1901 to 2225 (DSMS…SATS). A serine-rich repeat region 2, SRR2 region spans residues 752–2244 (SMSDSVSTSG…AQSEERLPDT (1493 aa)). Residues 2241–2245 (LPDTG) carry the LPXTG sorting signal motif. Position 2244 is a pentaglycyl murein peptidoglycan amidated threonine (Thr-2244). The propeptide at 2245 to 2283 (GESIKQNGLLGGIMTLLVGLGLMKRKKKKDENDQDDSQA) is removed by sortase.

This sequence belongs to the serine-rich repeat protein (SRRP) family. Post-translationally, proteolytically cleaved by a metalloprotease. In terms of processing, glycosylated. It is probable that most of the Ser residues in SSR1 and SSR2 are O-GlcNAcylated. Sequential glycosylation by sugar transferases are able to generate complex sugar polymorphisms.

The protein localises to the secreted. It is found in the cell wall. Mediates binding to human platelets, possibly through a receptor-ligand interaction. Probably associated with virulence in endovascular infection. The chain is Serine-rich adhesin for platelets (sraP) from Staphylococcus aureus.